The following is a 150-amino-acid chain: UPF0506 protein SJCHGC02381 (150 aa).

Positions 1–18 (MNTCIQLLILCLVTVINS) are cleaved as a signal peptide. Residues Asn-20, Asn-24, Asn-32, Asn-36, Asn-48, Asn-52, Asn-64, and Asn-110 are each glycosylated (N-linked (GlcNAc...) asparagine). The disordered stretch occupies residues 22–49 (TDNSTENTIKNETENATETELPETFENE). Positions 36–49 (NATETELPETFENE) are enriched in acidic residues. Intrachain disulfides connect Cys-116-Cys-130, Cys-123-Cys-134, and Cys-129-Cys-139.

This sequence belongs to the UPF0506 family.

The protein localises to the secreted. This is UPF0506 protein SJCHGC02381 from Schistosoma japonicum (Blood fluke).